The primary structure comprises 697 residues: Elongation factor G 1 (697 aa).

The tr-type G domain maps to 8 to 283; the sequence is ERYRNFGIMA…AVVDFLPSPV (276 aa). Residues 17–24, 81–85, and 135–138 contribute to the GTP site; these read AHIDAGKT, DTPGH, and NKMD.

The protein belongs to the TRAFAC class translation factor GTPase superfamily. Classic translation factor GTPase family. EF-G/EF-2 subfamily.

Its subcellular location is the cytoplasm. Its function is as follows. Catalyzes the GTP-dependent ribosomal translocation step during translation elongation. During this step, the ribosome changes from the pre-translocational (PRE) to the post-translocational (POST) state as the newly formed A-site-bound peptidyl-tRNA and P-site-bound deacylated tRNA move to the P and E sites, respectively. Catalyzes the coordinated movement of the two tRNA molecules, the mRNA and conformational changes in the ribosome. This chain is Elongation factor G 1, found in Anaeromyxobacter dehalogenans (strain 2CP-C).